Reading from the N-terminus, the 464-residue chain is Fumarate hydratase class II (464 aa).

Substrate is bound by residues 96–98 (SGT), 127–130 (HPND), 137–139 (SSN), and threonine 185. Histidine 186 acts as the Proton donor/acceptor in catalysis. The active site involves serine 316. Substrate contacts are provided by residues serine 317 and 322–324 (KVN).

Belongs to the class-II fumarase/aspartase family. Fumarase subfamily. As to quaternary structure, homotetramer.

It localises to the cytoplasm. It catalyses the reaction (S)-malate = fumarate + H2O. It functions in the pathway carbohydrate metabolism; tricarboxylic acid cycle; (S)-malate from fumarate: step 1/1. Involved in the TCA cycle. Catalyzes the stereospecific interconversion of fumarate to L-malate. In Pseudomonas putida (strain ATCC 47054 / DSM 6125 / CFBP 8728 / NCIMB 11950 / KT2440), this protein is Fumarate hydratase class II.